Consider the following 163-residue polypeptide: Nucleotide-binding protein YajQ (163 aa).

This sequence belongs to the YajQ family.

Its function is as follows. Nucleotide-binding protein. In Shigella dysenteriae serotype 1 (strain Sd197), this protein is Nucleotide-binding protein YajQ.